The chain runs to 156 residues: Small ribosomal subunit protein uS7 (156 aa).

Belongs to the universal ribosomal protein uS7 family. As to quaternary structure, part of the 30S ribosomal subunit. Contacts proteins S9 and S11.

Its function is as follows. One of the primary rRNA binding proteins, it binds directly to 16S rRNA where it nucleates assembly of the head domain of the 30S subunit. Is located at the subunit interface close to the decoding center, probably blocks exit of the E-site tRNA. In Nitratidesulfovibrio vulgaris (strain ATCC 29579 / DSM 644 / CCUG 34227 / NCIMB 8303 / VKM B-1760 / Hildenborough) (Desulfovibrio vulgaris), this protein is Small ribosomal subunit protein uS7.